A 279-amino-acid chain; its full sequence is DegV domain-containing protein spr1019 (279 aa).

One can recognise a DegV domain in the interval 4–277; sequence IKIVTDSSVT…ENAWAILIRY (274 aa). The hexadecanoate site is built by T62 and S94.

In terms of biological role, may bind long-chain fatty acids, such as palmitate, and may play a role in lipid transport or fatty acid metabolism. This chain is DegV domain-containing protein spr1019, found in Streptococcus pneumoniae (strain ATCC BAA-255 / R6).